A 305-amino-acid polypeptide reads, in one-letter code: Acetaldehyde dehydrogenase 5 (305 aa).

NAD(+) is bound at residue 11 to 14 (SGNI). The active-site Acyl-thioester intermediate is Cys-130. NAD(+) is bound by residues 161–169 (SIGPGTRAN) and Asn-272.

The protein belongs to the acetaldehyde dehydrogenase family.

The catalysed reaction is acetaldehyde + NAD(+) + CoA = acetyl-CoA + NADH + H(+). The protein is Acetaldehyde dehydrogenase 5 of Dechloromonas aromatica (strain RCB).